We begin with the raw amino-acid sequence, 538 residues long: Nicotinate phosphoribosyltransferase (538 aa).

2 residues coordinate nicotinate: Tyr-21 and Thr-210. His-213 bears the Phosphohistidine mark. Arg-318 lines the nicotinate pocket. Thr-380 contacts 5-phospho-alpha-D-ribose 1-diphosphate.

This sequence belongs to the NAPRTase family. In terms of assembly, homodimer. Mg(2+) is required as a cofactor. The cofactor is Mn(2+). Transiently phosphorylated on a His residue during the reaction cycle. Phosphorylation strongly increases the affinity for substrates and increases the rate of nicotinate D-ribonucleotide production. Dephosphorylation regenerates the low-affinity form of the enzyme, leading to product release.

It is found in the cytoplasm. The protein resides in the cytosol. It carries out the reaction nicotinate + 5-phospho-alpha-D-ribose 1-diphosphate + ATP + H2O = nicotinate beta-D-ribonucleotide + ADP + phosphate + diphosphate. It functions in the pathway cofactor biosynthesis; NAD(+) biosynthesis; nicotinate D-ribonucleotide from nicotinate: step 1/1. Its function is as follows. Catalyzes the first step in the biosynthesis of NAD from nicotinic acid, the ATP-dependent synthesis of beta-nicotinate D-ribonucleotide from nicotinate and 5-phospho-D-ribose 1-phosphate. Helps prevent cellular oxidative stress via its role in NAD biosynthesis. The sequence is that of Nicotinate phosphoribosyltransferase (NAPRT) from Bos taurus (Bovine).